Consider the following 225-residue polypeptide: Small ribosomal subunit protein uS5 (225 aa).

The S5 DRBM domain maps to 57–120 (LEEQVLDVKL…AHAKLSLIKV (64 aa)).

The protein belongs to the universal ribosomal protein uS5 family. In terms of assembly, part of the 30S ribosomal subunit. Contacts protein S4.

In terms of biological role, with S4 and S12 plays an important role in translational accuracy. This is Small ribosomal subunit protein uS5 from Methanococcus maripaludis (strain DSM 14266 / JCM 13030 / NBRC 101832 / S2 / LL).